The sequence spans 376 residues: Probable ribonucleoside-diphosphate reductase small subunit 048L (376 aa).

The Fe cation site is built by D110, E140, and H143. Residue Y147 is part of the active site. Positions 217, 251, and 254 each coordinate Fe cation.

Belongs to the ribonucleoside diphosphate reductase small chain family. In terms of assembly, heterotetramer composed of a homodimer of the large subunit (R1) and a homodimer of the small subunit (R2). Larger multisubunit protein complex are also active, composed of (R1)n(R2)n. Requires Fe cation as cofactor.

The catalysed reaction is a 2'-deoxyribonucleoside 5'-diphosphate + [thioredoxin]-disulfide + H2O = a ribonucleoside 5'-diphosphate + [thioredoxin]-dithiol. Functionally, ribonucleoside-diphosphate reductase holoenzyme provides the precursors necessary for viral DNA synthesis. Allows virus growth in non-dividing cells. Catalyzes the biosynthesis of deoxyribonucleotides from the corresponding ribonucleotides. The chain is Probable ribonucleoside-diphosphate reductase small subunit 048L from Invertebrate iridescent virus 3 (IIV-3).